The sequence spans 671 residues: MNSSKITPQRLALSIVCSLAAGFCAASLYATFRHGFNGEAMMTFSVFAFWYETPLYIGHATPVFFCGLSIIIATSVVVLLSQLIISLRNREHHGTARWAAFGEMRHAGYLQRYNRIKGPVFGKTCGPLWFGNYLTNGEQPHSLVVAPTRAGKGVGVVIPTLLTFKGTVIALDVKGELFELTSRARKSSGDAVFKFSPLDPERRTHCYNPVLDIAALPPERQFTETRRLAANLITAKGKGAEGFIDGARDLFVAGILTCIERGTPTIGAVYDLFAQPGEKYKLFAHLAEESRNKEAQRIFDNMAGNDTKILTSYTSVLGDGGLNLWADPLVKAATSRSDFSVYDLRRKRTCVYLCVSPNDLEVVAPLMRLLFQQVVSILQRSLPGKDERYEVLFLLDEFKHLGKLEAIETAITTIAGYKGRFMFIIQSLSALSGTYDEAGKQNFLSNTGVQVFMATADDETPTYISKAIGEYTFQARSTSYSQARMFDHNIQISDQGAPLLRPEQVRLLDDKSEIVLIKGQPPLKLRKVRYYSDRMLRRLFECQIGALPEPASLMLAQDVHQDGQDHLSQQAAVTAALGLGDIDSLVNNGETPTQQNSDMNDEQDNLAIGIYAPQVSVEIDDVVEDANARGVAPVSSVPAEMAPALSAQQQLLGQIIALQQRYRPVSSNPIE.

Transmembrane regions (helical) follow at residues 12–32 (ALSI…YATF), 60–80 (ATPV…VVLL), and 153–173 (GVGV…ALDV).

Belongs to the VirD4/TraG family.

It is found in the cell membrane. This Rhizobium rhizogenes (Agrobacterium rhizogenes) protein is Protein VirD4 (virD4).